A 122-amino-acid chain; its full sequence is Acidic phospholipase A2 CbIalpha (122 aa).

7 cysteine pairs are disulfide-bonded: cysteine 26-cysteine 115, cysteine 28-cysteine 44, cysteine 43-cysteine 95, cysteine 49-cysteine 122, cysteine 50-cysteine 88, cysteine 57-cysteine 81, and cysteine 75-cysteine 86. Residues tyrosine 27, glycine 29, and glycine 31 each contribute to the Ca(2+) site. The active site involves histidine 47. Aspartate 48 contacts Ca(2+). Residue aspartate 89 is part of the active site.

It belongs to the phospholipase A2 family. Group II subfamily. D49 sub-subfamily. Heterodimer of an acidic subunit (CbIalpha or CbIbeta) and a basic subunit (CbII). The acidic subunit is non-toxic, and increases the toxicity of the basic subunit. Ca(2+) is required as a cofactor. Expressed by the venom gland.

It is found in the secreted. It carries out the reaction a 1,2-diacyl-sn-glycero-3-phosphocholine + H2O = a 1-acyl-sn-glycero-3-phosphocholine + a fatty acid + H(+). Functionally, heterodimer: presynaptic neurotoxin. In terms of biological role, monomer: Snake venom phospholipase A2 (PLA2) is inactive towards micellar phosphatidylcholine but is weakly active towards non-micellar dithiolecithin. PLA2 catalyzes the calcium-dependent hydrolysis of the 2-acyl groups in 3-sn-phosphoglycerides. This is Acidic phospholipase A2 CbIalpha from Pseudocerastes fieldi (Field's horned viper).